Consider the following 429-residue polypeptide: GTPase Obg (429 aa).

Residues Met-1–Leu-158 form the Obg domain. A disordered region spans residues Arg-124–Pro-145. The region spanning Ala-159–Glu-329 is the OBG-type G domain. GTP contacts are provided by residues Gly-165–Ser-172, Phe-190–Val-194, Asp-212–Gly-215, Asn-282–Asp-285, and Ser-310–Val-312. Mg(2+)-binding residues include Ser-172 and Thr-192. The OCT domain maps to Lys-351 to Asp-429.

Belongs to the TRAFAC class OBG-HflX-like GTPase superfamily. OBG GTPase family. As to quaternary structure, monomer. Mg(2+) serves as cofactor.

The protein resides in the cytoplasm. Its function is as follows. An essential GTPase which binds GTP, GDP and possibly (p)ppGpp with moderate affinity, with high nucleotide exchange rates and a fairly low GTP hydrolysis rate. Plays a role in control of the cell cycle, stress response, ribosome biogenesis and in those bacteria that undergo differentiation, in morphogenesis control. This is GTPase Obg from Listeria innocua serovar 6a (strain ATCC BAA-680 / CLIP 11262).